The primary structure comprises 292 residues: Inositol oxygenase (292 aa).

Substrate-binding positions include arginine 33 and 88-90 (DES). 3 residues coordinate Fe cation: histidine 101, histidine 128, and aspartate 129. Substrate contacts are provided by residues lysine 132 and 149–150 (GD). Histidine 201, histidine 227, and aspartate 260 together coordinate Fe cation. Residue 227 to 228 (HS) coordinates substrate.

The protein belongs to the myo-inositol oxygenase family. Requires Fe cation as cofactor.

Its subcellular location is the cytoplasm. It carries out the reaction myo-inositol + O2 = D-glucuronate + H2O + H(+). It functions in the pathway polyol metabolism; myo-inositol degradation into D-glucuronate; D-glucuronate from myo-inositol: step 1/1. The chain is Inositol oxygenase (miox) from Dictyostelium discoideum (Social amoeba).